The following is a 138-amino-acid chain: Large ribosomal subunit protein uL16 (138 aa).

This sequence belongs to the universal ribosomal protein uL16 family. As to quaternary structure, part of the 50S ribosomal subunit.

In terms of biological role, binds 23S rRNA and is also seen to make contacts with the A and possibly P site tRNAs. The chain is Large ribosomal subunit protein uL16 from Ureaplasma parvum serovar 3 (strain ATCC 27815 / 27 / NCTC 11736).